The chain runs to 354 residues: S-adenosylmethionine:tRNA ribosyltransferase-isomerase (354 aa).

Belongs to the QueA family. In terms of assembly, monomer.

The protein resides in the cytoplasm. The catalysed reaction is 7-aminomethyl-7-carbaguanosine(34) in tRNA + S-adenosyl-L-methionine = epoxyqueuosine(34) in tRNA + adenine + L-methionine + 2 H(+). Its pathway is tRNA modification; tRNA-queuosine biosynthesis. Its function is as follows. Transfers and isomerizes the ribose moiety from AdoMet to the 7-aminomethyl group of 7-deazaguanine (preQ1-tRNA) to give epoxyqueuosine (oQ-tRNA). This chain is S-adenosylmethionine:tRNA ribosyltransferase-isomerase, found in Dichelobacter nodosus (strain VCS1703A).